The sequence spans 574 residues: Putative ABC transporter ATP-binding protein VVA0347 (574 aa).

ABC transporter domains lie at 3-244 (IEFS…GIRE) and 299-533 (LDVR…ANLT). ATP is bound by residues 37 to 44 (GPSGSGKS) and 332 to 339 (GKNGSGKS).

Belongs to the ABC transporter superfamily.

Its subcellular location is the cell inner membrane. Its function is as follows. Probably part of an ABC transporter complex. Responsible for energy coupling to the transport system. The chain is Putative ABC transporter ATP-binding protein VVA0347 from Vibrio vulnificus (strain YJ016).